The primary structure comprises 136 residues: UPF0213 protein ASA_0550 (136 aa).

One can recognise a GIY-YIG domain in the interval 17–92; it reads GQWSIYLVRT…KQQSKAFKER (76 aa).

The protein belongs to the UPF0213 family.

This chain is UPF0213 protein ASA_0550, found in Aeromonas salmonicida (strain A449).